The following is a 67-amino-acid chain: UPF0435 protein SSP0913 (67 aa).

This sequence belongs to the UPF0435 family.

This chain is UPF0435 protein SSP0913, found in Staphylococcus saprophyticus subsp. saprophyticus (strain ATCC 15305 / DSM 20229 / NCIMB 8711 / NCTC 7292 / S-41).